Reading from the N-terminus, the 396-residue chain is Probable porphobilinogen deaminase (396 aa).

A disordered region spans residues 159–224 (APALHREHER…DTASSSEFEQ (66 aa)). Residues 159–245 (APALHREHER…LQQSAMERDP (87 aa)) form an insert region. Positions 162–189 (LHREHERRTEAEKEAQSRDAREQRRGDY) are enriched in basic and acidic residues. Acidic residues predominate over residues 200 to 215 (LDTEDGEEGAADDGDD). Cysteine 328 is subject to S-(dipyrrolylmethanemethyl)cysteine.

This sequence belongs to the HMBS family. It depends on dipyrromethane as a cofactor.

The catalysed reaction is 4 porphobilinogen + H2O = hydroxymethylbilane + 4 NH4(+). It participates in porphyrin-containing compound metabolism; protoporphyrin-IX biosynthesis; coproporphyrinogen-III from 5-aminolevulinate: step 2/4. In terms of biological role, tetrapolymerization of the monopyrrole PBG into the hydroxymethylbilane pre-uroporphyrinogen in several discrete steps. The protein is Probable porphobilinogen deaminase (hemC) of Halobacterium salinarum (strain ATCC 700922 / JCM 11081 / NRC-1) (Halobacterium halobium).